The chain runs to 100 residues: Small ribosomal subunit protein uS14c (100 aa).

The protein belongs to the universal ribosomal protein uS14 family. As to quaternary structure, part of the 30S ribosomal subunit.

The protein localises to the plastid. It is found in the chloroplast. Functionally, binds 16S rRNA, required for the assembly of 30S particles. The sequence is that of Small ribosomal subunit protein uS14c from Olimarabidopsis pumila (Dwarf rocket).